A 349-amino-acid polypeptide reads, in one-letter code: Protein-glutamate methylesterase/protein-glutamine glutaminase 2 (349 aa).

A Response regulatory domain is found at 4–121; the sequence is SVLVVDDSAL…AEGMQAYAEE (118 aa). A 4-aspartylphosphate modification is found at D55. One can recognise a CheB-type methylesterase domain in the interval 151 to 343; the sequence is LLSTEKIIAL…AALLQQAARR (193 aa). Catalysis depends on residues S163, H189, and D285.

The protein belongs to the CheB family. In terms of assembly, interacts with the C-terminal pentapeptide GWEEF of McpB. Phosphorylated by CheA. Phosphorylation of the N-terminal regulatory domain activates the methylesterase activity.

It is found in the cytoplasm. The catalysed reaction is [protein]-L-glutamate 5-O-methyl ester + H2O = L-glutamyl-[protein] + methanol + H(+). The enzyme catalyses L-glutaminyl-[protein] + H2O = L-glutamyl-[protein] + NH4(+). Involved in chemotaxis. Part of a chemotaxis signal transduction system that modulates chemotaxis in response to various stimuli. Catalyzes the demethylation of specific methylglutamate residues introduced into the chemoreceptors (methyl-accepting chemotaxis proteins or MCP) by CheR. Also mediates the irreversible deamidation of specific glutamine residues to glutamic acid. Acts on the methyl-accepting chemotaxis protein McpB. May be involved in a specific chemotactic response, which takes place during infection and is required for P.aeruginosa pathogenicity. The chain is Protein-glutamate methylesterase/protein-glutamine glutaminase 2 from Pseudomonas aeruginosa (strain ATCC 15692 / DSM 22644 / CIP 104116 / JCM 14847 / LMG 12228 / 1C / PRS 101 / PAO1).